The sequence spans 334 residues: Phosphate acyltransferase (334 aa).

The protein belongs to the PlsX family. Homodimer. Probably interacts with PlsY.

The protein localises to the cytoplasm. It catalyses the reaction a fatty acyl-[ACP] + phosphate = an acyl phosphate + holo-[ACP]. The protein operates within lipid metabolism; phospholipid metabolism. Its function is as follows. Catalyzes the reversible formation of acyl-phosphate (acyl-PO(4)) from acyl-[acyl-carrier-protein] (acyl-ACP). This enzyme utilizes acyl-ACP as fatty acyl donor, but not acyl-CoA. The sequence is that of Phosphate acyltransferase from Desulfitobacterium hafniense (strain DSM 10664 / DCB-2).